The following is a 364-amino-acid chain: Adenine deaminase (364 aa).

Zn(2+) is bound by residues His25, His27, and His221. Glu224 serves as the catalytic Proton donor. Zn(2+) is bound at residue Asp301. Asp302 is a binding site for substrate.

Belongs to the metallo-dependent hydrolases superfamily. Adenosine and AMP deaminases family. Adenine deaminase type 2 subfamily. Zn(2+) serves as cofactor.

It is found in the cytoplasm. The protein localises to the nucleus. The catalysed reaction is adenine + H2O + H(+) = hypoxanthine + NH4(+). Catalyzes the hydrolytic deamination of adenine to hypoxanthine. Plays an important role in the purine salvage pathway and in nitrogen catabolism. Has no activity with adenosine as a substrate. This is Adenine deaminase (aah1) from Emericella nidulans (strain FGSC A4 / ATCC 38163 / CBS 112.46 / NRRL 194 / M139) (Aspergillus nidulans).